The primary structure comprises 171 residues: Large ribosomal subunit protein bL21 (171 aa).

The segment at 144–171 (AAPAKAEAAPKKKAAPKKAAAKTEEGEA) is disordered. Residues 154–163 (KKKAAPKKAA) show a composition bias toward basic residues.

It belongs to the bacterial ribosomal protein bL21 family. In terms of assembly, part of the 50S ribosomal subunit. Contacts protein L20.

This protein binds to 23S rRNA in the presence of protein L20. In Caulobacter vibrioides (strain ATCC 19089 / CIP 103742 / CB 15) (Caulobacter crescentus), this protein is Large ribosomal subunit protein bL21.